The chain runs to 1526 residues: DNA topoisomerase 2-alpha (1526 aa).

N-acetylmethionine is present on methionine 1. Phosphoserine is present on serine 4. Lysine 17 is covalently cross-linked (Glycyl lysine isopeptide (Lys-Gly) (interchain with G-Cter in SUMO2)). ATP contacts are provided by residues asparagine 90, asparagine 118, and 146–148; that span reads SSN. Residues lysine 154 and lysine 155 each participate in a glycyl lysine isopeptide (Lys-Gly) (interchain with G-Cter in SUMO2) cross-link. Residue 159-166 participates in ATP binding; sequence GRNGYGAK. Threonine 280 carries the post-translational modification Phosphothreonine. The segment at 340-342 is interaction with DNA; sequence KKK. A Glycyl lysine isopeptide (Lys-Gly) (interchain with G-Cter in SUMO2) cross-link involves residue lysine 350. ATP is bound at residue 374–376; the sequence is QTK. Residues lysine 384, lysine 395, lysine 414, lysine 416, lysine 423, and lysine 438 each participate in a glycyl lysine isopeptide (Lys-Gly) (interchain with G-Cter in SUMO2) cross-link. The 118-residue stretch at 453–570 folds into the Toprim domain; it reads CTLILTEGDS…SLLRHRFLEE (118 aa). Residue glutamate 459 participates in Mg(2+) binding. Residues lysine 464, lysine 478, and lysine 527 each participate in a glycyl lysine isopeptide (Lys-Gly) (interchain with G-Cter in SUMO2) cross-link. Mg(2+)-binding residues include aspartate 539 and aspartate 541. Residues lysine 582, lysine 597, lysine 612, lysine 620, lysine 623, lysine 630, lysine 637, lysine 653, lysine 660, and lysine 674 each participate in a glycyl lysine isopeptide (Lys-Gly) (interchain with G-Cter in SUMO2) cross-link. The region spanning 713 to 1168 is the Topo IIA-type catalytic domain; it reads IPSMVDGLKP…TPSDLWKEDL (456 aa). Tyrosine 803 acts as the O-(5'-phospho-DNA)-tyrosine intermediate in catalysis. The tract at residues 988–997 is interaction with DNA; the sequence is KLQTSLTCNS. Lysine 1073 participates in a covalent cross-link: Glycyl lysine isopeptide (Lys-Gly) (interchain with G-Cter in SUMO2). Residues 1087–1096 show a composition bias toward basic and acidic residues; that stretch reads AWKEAQQKVP. Positions 1087-1120 are disordered; it reads AWKEAQQKVPEEEENEENEESESESTSPAAESGP. Residues 1097–1109 are compositionally biased toward acidic residues; the sequence is EEEENEENEESES. Glycyl lysine isopeptide (Lys-Gly) (interchain with G-Cter in SUMO2) cross-links involve residues lysine 1193 and lysine 1201. A Phosphoserine modification is found at serine 1210. Residues 1229-1526 form a disordered region; it reads EKKIRRKIKS…YLEESDDDLF (298 aa). Lysine 1237 is covalently cross-linked (Glycyl lysine isopeptide (Lys-Gly) (interchain with G-Cter in SUMO1); alternate). Lysine 1237 is covalently cross-linked (Glycyl lysine isopeptide (Lys-Gly) (interchain with G-Cter in SUMO2); alternate). A Phosphothreonine modification is found at threonine 1244. Over residues 1254–1268 the composition is skewed to basic and acidic residues; the sequence is LRQRLEKRQKREPGT. Residues lysine 1272, lysine 1279, and lysine 1282 each participate in a glycyl lysine isopeptide (Lys-Gly) (interchain with G-Cter in SUMO2) cross-link. Phosphoserine occurs at positions 1291, 1293, 1295, and 1298. Residue threonine 1323 is modified to Phosphothreonine. A compositionally biased stretch (acidic residues) spans 1326–1346; the sequence is LDSDDDFSGLDEKDEDEDFFP. Phosphoserine occurs at positions 1328 and 1333. Threonine 1350 bears the Phosphothreonine mark. Glycyl lysine isopeptide (Lys-Gly) (interchain with G-Cter in SUMO2) cross-links involve residues lysine 1359, lysine 1363, and lysine 1369. A phosphoserine mark is found at serine 1370 and serine 1373. A Glycyl lysine isopeptide (Lys-Gly) (interchain with G-Cter in SUMO2) cross-link involves residue lysine 1381. A phosphoserine mark is found at serine 1383 and serine 1387. Over residues 1417-1427 the composition is skewed to polar residues; the sequence is TKGQSLTSTAG. Residue lysine 1418 forms a Glycyl lysine isopeptide (Lys-Gly) (interchain with G-Cter in SUMO2); alternate linkage. Lysine 1418 bears the N6-acetyllysine; alternate mark. Residues 1429–1435 form an interaction with PLSCR1 region; it reads KKRAVPK. Lysine 1438 participates in a covalent cross-link: Glycyl lysine isopeptide (Lys-Gly) (interchain with G-Cter in SUMO2); alternate. Lysine 1438 is subject to N6-acetyllysine; alternate. Glycyl lysine isopeptide (Lys-Gly) (interchain with G-Cter in SUMO2) cross-links involve residues lysine 1450 and lysine 1455. Serine 1465, serine 1467, serine 1470, and serine 1472 each carry phosphoserine. Glycyl lysine isopeptide (Lys-Gly) (interchain with G-Cter in SUMO2) cross-links involve residues lysine 1480 and lysine 1488. Residues 1487–1498 are compositionally biased toward basic and acidic residues; sequence LKGEERDFHVDL. A Phosphoserine modification is found at serine 1521.

This sequence belongs to the type II topoisomerase family. Homodimer. Interacts with COPS5. Interacts with RECQL5; this stimulates DNA decatenation. Interacts with SETMAR; stimulates the topoisomerase activity. Interacts with DHX9; this interaction occurs in a E2 enzyme UBE2I- and RNA-dependent manner, negatively regulates DHX9-mediated double-stranded DNA and RNA duplex helicase activity and stimulates TOP2A-mediated supercoiled DNA relaxation activity. Interacts with HNRNPU (via C-terminus); this interaction protects the topoisomerase TOP2A from degradation and positively regulates the relaxation of supercoiled DNA in a RNA-dependent manner. Interacts with MCM3AP. Interacts with ERCC6. Interacts with PLSCR1. Interacts with GCNA; this interaction allows the resolution of topoisomerase II (TOP2A) DNA-protein cross-links. Interacts with POL1RA/RPA1 (via dock II) and UBTF in the context of Pol I complex; may assist Pol I transcription initiation by releasing supercoils occurring during DNA unwinding. Interacts with TPRN; TPRN interacts with a number of DNA damage response proteins, is recruited to sites of DNA damage and may play a role in DNA damage repair. Requires Mg(2+) as cofactor. Mn(2+) serves as cofactor. The cofactor is Ca(2+). Phosphorylation has no effect on catalytic activity.

The protein localises to the cytoplasm. Its subcellular location is the nucleus. It is found in the nucleoplasm. The protein resides in the nucleolus. The enzyme catalyses ATP-dependent breakage, passage and rejoining of double-stranded DNA.. Functionally, key decatenating enzyme that alters DNA topology by binding to two double-stranded DNA molecules, generating a double-stranded break in one of the strands, passing the intact strand through the broken strand, and religating the broken strand. May play a role in regulating the period length of BMAL1 transcriptional oscillation. The chain is DNA topoisomerase 2-alpha (Top2a) from Rattus norvegicus (Rat).